Reading from the N-terminus, the 431-residue chain is Levansucrase LscC (431 aa).

Sucrose-binding residues include Trp-61, Asp-62, Ala-148, Arg-218, and Asp-219. Asp-62 functions as the Nucleophile in the catalytic mechanism. Catalysis depends on Glu-303, which acts as the Proton donor/acceptor.

It belongs to the glycosyl hydrolase 68 family.

It localises to the periplasm. It catalyses the reaction [6)-beta-D-fructofuranosyl-(2-&gt;](n) alpha-D-glucopyranoside + sucrose = [6)-beta-D-fructofuranosyl-(2-&gt;](n+1) alpha-D-glucopyranoside + D-glucose. Catalyzes the synthesis of levan, a fructose polymer, by transferring the fructosyl moiety from sucrose to a growing acceptor molecule. This Pseudomonas savastanoi pv. glycinea (Pseudomonas syringae pv. glycinea) protein is Levansucrase LscC.